The primary structure comprises 140 residues: Nucleoside diphosphate kinase (140 aa).

Residues Lys-10, Phe-58, Arg-86, Thr-92, Arg-103, and Asn-113 each coordinate ATP. The Pros-phosphohistidine intermediate role is filled by His-116.

The protein belongs to the NDK family. In terms of assembly, homotetramer. The cofactor is Mg(2+).

The protein localises to the cytoplasm. The catalysed reaction is a 2'-deoxyribonucleoside 5'-diphosphate + ATP = a 2'-deoxyribonucleoside 5'-triphosphate + ADP. The enzyme catalyses a ribonucleoside 5'-diphosphate + ATP = a ribonucleoside 5'-triphosphate + ADP. In terms of biological role, major role in the synthesis of nucleoside triphosphates other than ATP. The ATP gamma phosphate is transferred to the NDP beta phosphate via a ping-pong mechanism, using a phosphorylated active-site intermediate. This is Nucleoside diphosphate kinase from Haemophilus influenzae (strain PittEE).